The chain runs to 603 residues: Coagulation factor XII (603 aa).

A signal peptide spans 1-18 (GRLLLGSLLVSLESALSA). Residues 41–89 (VTGEPCYFPFQYNRQLYHHCIHKGRPGPRPWCATTPNFDQDQQWAYCLE) form the Fibronectin type-II domain. Cystine bridges form between C46/C72, C60/C87, C97/C109, C103/C118, C120/C129, C134/C162, C160/C169, C177/C188, C182/C197, C199/C208, C216/C294, C237/C276, C265/C289, C345/C472, C383/C399, C391/C461, C422/C425, C488/C557, C520/C536, and C547/C578. The region spanning 93–130 (VKDHCSKHNPCQRGGICVNTLSSPHCLCPDHLTGKHCQ) is the EGF-like 1 domain. The region spanning 132 to 172 (EKCFEPQLHRFFHENEIWFRTGPAGVAKCHCKGPDAHCKQM) is the Fibronectin type-I domain. Residues 173–209 (HSQECQTNPCLNGGRCLEVEGHHLCDCPMGYTGPFCD) form the EGF-like 2 domain. Positions 216–294 (CYEGRGVSYR…SWEYCDLAQC (79 aa)) constitute a Kringle domain. 2 N-linked (GlcNAc...) asparagine glycosylation sites follow: N248 and N270. Residues 359-602 (IVGGLVALPG…YLTWIQKHTA (244 aa)) enclose the Peptidase S1 domain. The active-site Charge relay system is the H398. N419 is a glycosylation site (N-linked (GlcNAc...) asparagine). The active-site Charge relay system is D447. S551 acts as the Charge relay system in catalysis.

This sequence belongs to the peptidase S1 family. In terms of assembly, interacts with HRG; the interaction, which is enhanced in the presence of zinc ions and inhibited by heparin-binding, inhibits factor XII autoactivation and contact-initiated coagulation. Post-translationally, O- and N-glycosylated.

The protein localises to the secreted. The enzyme catalyses Selective cleavage of Arg-|-Ile bonds in factor VII to form factor VIIa and factor XI to form factor XIa.. Its activity is regulated as follows. Activity is promoted in the presence of negatively charged surfaces. Functionally, factor XII is a serum glycoprotein that participates in the initiation of blood coagulation, fibrinolysis, and the generation of bradykinin and angiotensin. Prekallikrein is cleaved by factor XII to form kallikrein, which then cleaves factor XII first to alpha-factor XIIa and then trypsin cleaves it to beta-factor XIIa. Alpha-factor XIIa activates factor XI to factor XIa. This chain is Coagulation factor XII (F12), found in Cavia porcellus (Guinea pig).